The sequence spans 366 residues: Peroxisomal (S)-2-hydroxy-acid oxidase GLO4 (366 aa).

The FMN hydroxy acid dehydrogenase domain occupies 1 to 360 (MEDNLPVNVR…TRSHVMTEGD (360 aa)). A 2-oxocarboxylate is bound at residue tyrosine 27. Residues 80 to 82 (PTG), serine 109, 130 to 132 (QLY), and threonine 158 each bind FMN. Residue tyrosine 132 coordinates a 2-oxocarboxylate. Position 167 (arginine 167) interacts with a 2-oxocarboxylate. FMN is bound by residues lysine 231 and serine 253. Catalysis depends on histidine 255, which acts as the Proton acceptor. A 2-oxocarboxylate is bound at residue arginine 258. Residues 286-290 (DGGIR) and 309-310 (GR) contribute to the FMN site. Positions 364–366 (SLL) match the Microbody targeting signal motif.

Belongs to the FMN-dependent alpha-hydroxy acid dehydrogenase family. Homotetramer. Binds to CATB and CATC; these interactions are disturbed by alpha-hydroxy-2-pyridinemethanesulfonic acid (HPMS) and salicylic acid (SA). It depends on FMN as a cofactor.

It is found in the peroxisome. It catalyses the reaction a (2S)-2-hydroxycarboxylate + O2 = a 2-oxocarboxylate + H2O2. It participates in lipid metabolism; fatty acid metabolism. Its function is as follows. Oxidase that catalyzes the oxidation of a broad range of 2-hydroxyacids to the corresponding 2-oxoacids, with a reduction of O2 to H2O2. May be involved in a general medium- and long-chain fatty acid catabolic pathway such as alpha-oxidation. The sequence is that of Peroxisomal (S)-2-hydroxy-acid oxidase GLO4 (GLO4) from Oryza sativa subsp. japonica (Rice).